Reading from the N-terminus, the 231-residue chain is Uridylate kinase (231 aa).

6 to 9 (KLSG) is a binding site for ATP. The involved in allosteric activation by GTP stretch occupies residues 14-19 (GEGGRG). 2 residues coordinate ATP: G49 and R53. UMP is bound by residues D66 and 127-134 (TSNPFFTT). ATP-binding residues include T154, Y160, and D163.

It belongs to the UMP kinase family. Homohexamer.

Its subcellular location is the cytoplasm. It carries out the reaction UMP + ATP = UDP + ADP. The protein operates within pyrimidine metabolism; CTP biosynthesis via de novo pathway; UDP from UMP (UMPK route): step 1/1. Its activity is regulated as follows. Allosterically activated by GTP. Inhibited by UTP. Catalyzes the reversible phosphorylation of UMP to UDP. The polypeptide is Uridylate kinase (Thermotoga maritima (strain ATCC 43589 / DSM 3109 / JCM 10099 / NBRC 100826 / MSB8)).